Here is a 30-residue protein sequence, read N- to C-terminus: Cyclotide mden-I (30 aa).

The segment at residues 1 to 30 (GIPCGESCVYIPCITTAIGCSCKNKVCYRN) is a cross-link (cyclopeptide (Gly-Asn)). 3 disulfide bridges follow: cysteine 4-cysteine 20, cysteine 8-cysteine 22, and cysteine 13-cysteine 27.

It belongs to the cyclotide family. Bracelet subfamily. Post-translationally, this is a cyclic peptide.

Probably participates in a plant defense mechanism. The sequence is that of Cyclotide mden-I from Melicytus dentatus (Tree violet).